The chain runs to 297 residues: Ribonuclease H2 subunit A (297 aa).

The RNase H type-2 domain occupies 21-248; it reads PCVLGIDEAG…ASTIVEKRCV (228 aa). Residues Asp-27, Glu-28, and Asp-138 each coordinate a divalent metal cation.

This sequence belongs to the RNase HII family. Eukaryotic subfamily. Mn(2+) is required as a cofactor. Requires Mg(2+) as cofactor.

The catalysed reaction is Endonucleolytic cleavage to 5'-phosphomonoester.. Functionally, catalytic subunit of RNase HII, an endonuclease that specifically degrades the RNA of RNA:DNA hybrids. Participates in DNA replication, possibly by mediating the removal of lagging-strand Okazaki fragment RNA primers during DNA replication. Mediates the excision of single ribonucleotides from DNA:RNA duplexes. The polypeptide is Ribonuclease H2 subunit A (rnh-2) (Caenorhabditis elegans).